The chain runs to 131 residues: ER membrane protein complex subunit 5 (131 aa).

The Cytoplasmic segment spans residues 1–3 (MAP). The helical transmembrane segment at 4–22 (SLWKGLVGIGLFALAHAAF) threads the bilayer. At 23 to 43 (SAAQHRSYMRLTEKEDESLPI) the chain is on the lumenal side. A helical membrane pass occupies residues 44-63 (DIVLQTLLAFAVTCYGIVHI). Topologically, residues 64–131 (AGEFKDMDAT…KLRKLESLRR (68 aa)) are cytoplasmic. Serine 120 is subject to Phosphoserine.

Belongs to the membrane magnesium transporter (TC 1.A.67) family. As to quaternary structure, component of the ER membrane protein complex (EMC).

The protein resides in the endoplasmic reticulum membrane. The protein localises to the golgi apparatus membrane. Its subcellular location is the early endosome membrane. Its function is as follows. Part of the endoplasmic reticulum membrane protein complex (EMC) that enables the energy-independent insertion into endoplasmic reticulum membranes of newly synthesized membrane proteins. Preferentially accommodates proteins with transmembrane domains that are weakly hydrophobic or contain destabilizing features such as charged and aromatic residues. Involved in the cotranslational insertion of multi-pass membrane proteins in which stop-transfer membrane-anchor sequences become ER membrane spanning helices. It is also required for the post-translational insertion of tail-anchored/TA proteins in endoplasmic reticulum membranes. By mediating the proper cotranslational insertion of N-terminal transmembrane domains in an N-exo topology, with translocated N-terminus in the lumen of the ER, controls the topology of multi-pass membrane proteins like the G protein-coupled receptors. By regulating the insertion of various proteins in membranes, it is indirectly involved in many cellular processes. May be involved in Mg(2+) transport. In Homo sapiens (Human), this protein is ER membrane protein complex subunit 5.